Consider the following 222-residue polypeptide: Sigma non-opioid intracellular receptor 1 (222 aa).

Topologically, residues 1–6 (MSLIRT) are lumenal. Residues 7 to 29 (ILKLVVVVGFLSLTVQFIRHWMA) form a helical membrane-spanning segment. Residues 30–222 (NKQYVFTKEE…STFLTESGVL (193 aa)) lie on the Cytoplasmic side of the membrane. Residues 97–104 (SLTEYVLL) are important for ligand-binding. Residues 175–222 (FIPSTLGFALADTMFSTQDFLTLFYTARVYVKGMILEASTFLTESGVL) form a C-terminal hydrophobic region region.

It belongs to the ERG2 family. Homotrimer.

It localises to the nucleus inner membrane. Its subcellular location is the nucleus outer membrane. It is found in the nucleus envelope. The protein localises to the cytoplasmic vesicle. The protein resides in the endoplasmic reticulum membrane. It localises to the membrane. In terms of biological role, may function in lipid transport from the endoplasmic reticulum and be involved in a wide array of cellular functions probably through regulation of the biogenesis of lipid microdomains at the plasma membrane. May regulate calcium efflux at the endoplasmic reticulum. This Danio rerio (Zebrafish) protein is Sigma non-opioid intracellular receptor 1 (sigmar1).